Here is a 322-residue protein sequence, read N- to C-terminus: uncharacterized protein (322 aa).

Residues 269-289 form a disordered region; sequence QDEEEEPRDERRPRRRLGKAQ.

This is an uncharacterized protein from Sinorhizobium fredii (strain NBRC 101917 / NGR234).